A 385-amino-acid chain; its full sequence is Prepilin peptidase EppA (385 aa).

Transmembrane regions (helical) follow at residues 1 to 21 (MILMVIELLSVFIALLACFYA), 29 to 49 (GIIPNRLTFPVIGLGLLLNGA), 58 to 78 (WIFIYTAIFTAGIFALGYILW), 80 to 100 (MVAWAGGDVKLFTAVTSLLPF), 104 to 124 (LVSYSFLGTAFPVTASYPFPL), 126 to 146 (VIINSILALLPFLLVYVFFII), 166 to 186 (TSMVLALVITSAVTLTFLITD), 187 to 207 (FLPFQIIVLSLILVYLLTMVI), 231 to 251 (FELTVSGVVILWVSITVIQLI), and 358 to 378 (PAIFIGLLVSLLIGDLAMILF).

The protein belongs to the peptidase A24 family.

The protein resides in the cell membrane. Peptidase that processes the N-terminus of prepilins. This Methanothermobacter thermautotrophicus (strain ATCC 29096 / DSM 1053 / JCM 10044 / NBRC 100330 / Delta H) (Methanobacterium thermoautotrophicum) protein is Prepilin peptidase EppA.